Here is a 341-residue protein sequence, read N- to C-terminus: UDP-glucose 4-epimerase (341 aa).

Belongs to the polysaccharide synthase family.

It carries out the reaction UDP-alpha-D-glucose = UDP-alpha-D-galactose. Epimerizes UDP-galactose to UDP-glucose. The protein is UDP-glucose 4-epimerase (capD) of Rickettsia conorii (strain ATCC VR-613 / Malish 7).